The chain runs to 249 residues: 2,3-bisphosphoglycerate-dependent phosphoglycerate mutase (249 aa).

Substrate is bound by residues 9–16 (RHGQSQWN), 22–23 (TG), R61, 88–91 (ERHY), K99, 115–116 (RR), and 184–185 (GN). The active-site Tele-phosphohistidine intermediate is the H10. Catalysis depends on E88, which acts as the Proton donor/acceptor.

Belongs to the phosphoglycerate mutase family. BPG-dependent PGAM subfamily. In terms of assembly, homodimer.

The enzyme catalyses (2R)-2-phosphoglycerate = (2R)-3-phosphoglycerate. The protein operates within carbohydrate degradation; glycolysis; pyruvate from D-glyceraldehyde 3-phosphate: step 3/5. Catalyzes the interconversion of 2-phosphoglycerate and 3-phosphoglycerate. The protein is 2,3-bisphosphoglycerate-dependent phosphoglycerate mutase of Xylella fastidiosa (strain M23).